The primary structure comprises 647 residues: MTQILSRISNPGDLQRLSATELDQLAKEIREVIIQTTSKNGGHLAPNLGVVELTLALHLVFQSPKDKIIWDVGHQSYVHKLLTGRYNHFHTLRRYKGMAGFPKRSESEHDVFNTGHSSTSISAALGFAFARDLKKEDGAVIAVIGDGALTGGIALEALNHAGHAGNDMIVVLNDNEKSIADNVGAMSTYLSRIRTDPRYFRNKEEVEEIVRRIPSIGNHVLKVMEKMKDSFKHLVVPGILFEELGFSYLGPIDGHNLSQLREVMTNACRLKGPILVHVLTKKGKGYGPAETNPSVFHGVGPFDVETGKVKKHLGPPTYTQVFSDTLLRLAREDERIVGVTAAMPDGTGMTPFARAFPSRFFDVGIAEQHAVNMSAALALQGLKPVVAIYSTFLQRAYDQVFHDVCLQRAPVVFAIDRGGIVGDDGETHHGLFDIAFLRHIPELVMMAPKDENELQHMLRTALEYEGPIAVRYPRGTGVGVTLDEELTTVPIGRGELLRQGSDVTIVAIGAMVGIAEEAADLLEAEGIRAAVVNARFVKPLDKELIIKQARETGRIVTVEEHVLAGGFGSAILELLEMEGVHCAVRRIGIPDEYVQHGSVSVLREDYGLTASNVARVARELADADRSRASIRMAPPAPIKIAFRGESR.

Thiamine diphosphate contacts are provided by residues His-74 and 115–117; that span reads GHS. Asp-146 is a binding site for Mg(2+). Thiamine diphosphate-binding positions include 147 to 148, Asn-175, Tyr-286, and Glu-367; that span reads GA. Asn-175 provides a ligand contact to Mg(2+).

This sequence belongs to the transketolase family. DXPS subfamily. As to quaternary structure, homodimer. Mg(2+) is required as a cofactor. Requires thiamine diphosphate as cofactor.

The catalysed reaction is D-glyceraldehyde 3-phosphate + pyruvate + H(+) = 1-deoxy-D-xylulose 5-phosphate + CO2. Its pathway is metabolic intermediate biosynthesis; 1-deoxy-D-xylulose 5-phosphate biosynthesis; 1-deoxy-D-xylulose 5-phosphate from D-glyceraldehyde 3-phosphate and pyruvate: step 1/1. Catalyzes the acyloin condensation reaction between C atoms 2 and 3 of pyruvate and glyceraldehyde 3-phosphate to yield 1-deoxy-D-xylulose-5-phosphate (DXP). The sequence is that of 1-deoxy-D-xylulose-5-phosphate synthase from Heliobacterium modesticaldum (strain ATCC 51547 / Ice1).